The following is a 207-amino-acid chain: Small ribosomal subunit protein uS4 (207 aa).

The interval 30–54 (DKCKLDSKPGQHGRTSGARTSDYGN) is disordered. Over residues 42–53 (GRTSGARTSDYG) the composition is skewed to polar residues. An S4 RNA-binding domain is found at 97-160 (SRLDNVVYRM…KKQVRIAEAL (64 aa)).

Belongs to the universal ribosomal protein uS4 family. In terms of assembly, part of the 30S ribosomal subunit. Contacts protein S5. The interaction surface between S4 and S5 is involved in control of translational fidelity.

Functionally, one of the primary rRNA binding proteins, it binds directly to 16S rRNA where it nucleates assembly of the body of the 30S subunit. With S5 and S12 plays an important role in translational accuracy. The sequence is that of Small ribosomal subunit protein uS4 from Cupriavidus taiwanensis (strain DSM 17343 / BCRC 17206 / CCUG 44338 / CIP 107171 / LMG 19424 / R1) (Ralstonia taiwanensis (strain LMG 19424)).